Reading from the N-terminus, the 656-residue chain is uncharacterized protein (656 aa).

The next 3 helical transmembrane spans lie at 7–27 (QQVL…LNHL), 40–60 (LMAM…FWTL), and 210–230 (AVFI…AFTI). Residues 231–280 (TRPIRELLTGVKNIASGDFYQRIDLPFGGELGALIFNFNEMAERLEKYEQ) form the HAMP domain. Residues 289–359 (EKAKLETLVS…PILNDIIRKN (71 aa)) form the PAS domain. The region spanning 424 to 654 (NVSHELRTPL…CFFFDLMIAK (231 aa)) is the Histidine kinase domain. His427 is subject to Phosphohistidine; by autocatalysis.

The protein localises to the plastid. The protein resides in the chloroplast membrane. It carries out the reaction ATP + protein L-histidine = ADP + protein N-phospho-L-histidine.. This is an uncharacterized protein from Porphyra purpurea (Red seaweed).